The primary structure comprises 356 residues: Phospho-N-acetylmuramoyl-pentapeptide-transferase (356 aa).

Transmembrane regions (helical) follow at residues 27-47 (AAVATAMILGLWIGPRFILML), 73-93 (TMGGLMILISLMISALLWMDL), 97-117 (FVWACLFVTAGFAVVGFLDDY), 134-154 (LLVEFLIAGVAVLLIVSRTGT), 163-183 (GIVIPLGPFYYVFAMVLIVGF), 195-215 (GLATFPVIIASLTFLVIVYLS), 232-252 (AGELAVFAAAIIGACLAFLWF), 258-278 (AVFMGDTGSLALGGALATIAV), 285-305 (VLVLVGGLFVVEALSVIIQVF), and 333-353 (TVVIRFWIVSIVLALAGLATL).

Belongs to the glycosyltransferase 4 family. MraY subfamily. The cofactor is Mg(2+).

It is found in the cell inner membrane. The enzyme catalyses UDP-N-acetyl-alpha-D-muramoyl-L-alanyl-gamma-D-glutamyl-meso-2,6-diaminopimeloyl-D-alanyl-D-alanine + di-trans,octa-cis-undecaprenyl phosphate = di-trans,octa-cis-undecaprenyl diphospho-N-acetyl-alpha-D-muramoyl-L-alanyl-D-glutamyl-meso-2,6-diaminopimeloyl-D-alanyl-D-alanine + UMP. It participates in cell wall biogenesis; peptidoglycan biosynthesis. Functionally, catalyzes the initial step of the lipid cycle reactions in the biosynthesis of the cell wall peptidoglycan: transfers peptidoglycan precursor phospho-MurNAc-pentapeptide from UDP-MurNAc-pentapeptide onto the lipid carrier undecaprenyl phosphate, yielding undecaprenyl-pyrophosphoryl-MurNAc-pentapeptide, known as lipid I. In Sphingopyxis alaskensis (strain DSM 13593 / LMG 18877 / RB2256) (Sphingomonas alaskensis), this protein is Phospho-N-acetylmuramoyl-pentapeptide-transferase.